Reading from the N-terminus, the 260-residue chain is Octanoyltransferase (260 aa).

The 200-residue stretch at 42–241 (PQVPDGLLLL…SFCQVFGLQA (200 aa)) folds into the BPL/LPL catalytic domain. Substrate-binding positions include 97–104 (RGGEVTYH), 172–174 (AIG), and 185–187 (GFA). Residue C203 is the Acyl-thioester intermediate of the active site.

This sequence belongs to the LipB family.

The protein resides in the cytoplasm. It catalyses the reaction octanoyl-[ACP] + L-lysyl-[protein] = N(6)-octanoyl-L-lysyl-[protein] + holo-[ACP] + H(+). It participates in protein modification; protein lipoylation via endogenous pathway; protein N(6)-(lipoyl)lysine from octanoyl-[acyl-carrier-protein]: step 1/2. Functionally, catalyzes the transfer of endogenously produced octanoic acid from octanoyl-acyl-carrier-protein onto the lipoyl domains of lipoate-dependent enzymes. Lipoyl-ACP can also act as a substrate although octanoyl-ACP is likely to be the physiological substrate. The sequence is that of Octanoyltransferase from Synechococcus sp. (strain JA-3-3Ab) (Cyanobacteria bacterium Yellowstone A-Prime).